We begin with the raw amino-acid sequence, 163 residues long: Arginine repressor (163 aa).

This sequence belongs to the ArgR family.

It localises to the cytoplasm. Its pathway is amino-acid biosynthesis; L-arginine biosynthesis [regulation]. Regulates arginine biosynthesis genes. This is Arginine repressor from Anaeromyxobacter dehalogenans (strain 2CP-C).